A 229-amino-acid chain; its full sequence is High molecular weight rubredoxin (229 aa).

Residues 1 to 158 (MDTKALHTLT…YYHQVKRGTT (158 aa)) form a flavodoxin-reductase-like region. Residues 178–229 (SPKYQCTICNYVYDPVQGDPEHGIAPGTPFADLPEDWTCPICGAGKDAFEQI) enclose the Rubredoxin-like domain. Fe cation contacts are provided by Cys183, Cys186, Cys216, and Cys219.

The protein in the N-terminal section; belongs to the flavodoxin reductase family. In terms of assembly, homodimer. Requires Fe cation as cofactor. FMN is required as a cofactor.

Its function is as follows. Has nitric oxide reductase activity in combination with FprA; probably involved in nitrosative stress protection. Acts as an NADH:FprA oxidoreductase. This is High molecular weight rubredoxin (hrb) from Moorella thermoacetica (strain ATCC 39073 / JCM 9320).